We begin with the raw amino-acid sequence, 48 residues long: uncharacterized protein (48 aa).

It localises to the plastid. The protein localises to the cyanelle. This is an uncharacterized protein from Cyanophora paradoxa.